Here is a 641-residue protein sequence, read N- to C-terminus: Sodium-dependent nutrient amino acid transporter 1 (641 aa).

Residues 1–34 (MELKGVQPSNGSANGNGTTNAASTEKADTEKQTA) are disordered. The Cytoplasmic segment spans residues 1–38 (MELKGVQPSNGSANGNGTTNAASTEKADTEKQTAERTN). The span at 9–24 (SNGSANGNGTTNAAST) shows a compositional bias: low complexity. The span at 25–34 (EKADTEKQTA) shows a compositional bias: basic and acidic residues. A run of 3 helical transmembrane segments spans residues 39–59 (WGNGLEFLMSCISVSVGLGNV), 72–92 (GAFLIPYIIVLFLIGKPMYYL), and 109–129 (SVVPGFVGVGYGQAFGTICII). N-linked (GlcNAc...) asparagine glycosylation is found at N183 and N188. A run of 9 helical transmembrane segments spans residues 229–249 (PDWKLTLALFVAWVVIFLVIM), 258–278 (AAYFLALFPYVVLFVLLIRAV), 307–327 (AVVQCFFSLAVGSGPIIMFAS), 341–361 (IVTTLDTLTSLLGGITIFAIL), 401–421 (LFSVLFFFMLFVLGIGSIVAL), 441–461 (VALITSACGFLMGLVYVTPGG), 474–494 (TYVVFILAIFELAGIVWVYGL), 516–536 (CWSFFTPVMMIIIFIYSMATI), and 552–572 (IAGWLLFAIGAAQFPLWGLWY).

It belongs to the sodium:neurotransmitter symporter (SNF) (TC 2.A.22) family.

It is found in the membrane. In terms of biological role, unusual broad substrate spectrum amino acid:sodium cotransporter that promotes absorption of the D isomers of essential amino acids. Neutral amino acids are the preferred substrates, especially methionine and phenylalanine. The sequence is that of Sodium-dependent nutrient amino acid transporter 1 from Drosophila yakuba (Fruit fly).